We begin with the raw amino-acid sequence, 244 residues long: Complement C1q subcomponent subunit A (244 aa).

Positions 1–22 are cleaved as a signal peptide; that stretch reads MEAPRGWLVISVLAISLASSVT. A disordered region spans residues 28–94; the sequence is APDGTHGSAG…PGPSGPMGPA (67 aa). The Collagen-like domain maps to 31–109; the sequence is GTHGSAGIPG…KGTKGSPGNI (79 aa). Pro39 and Pro45 each carry 4-hydroxyproline. Lys48 is modified (5-hydroxylysine). Lys48 is a glycosylation site (O-linked (Gal...) hydroxylysine). 2 positions are modified to 4-hydroxyproline: Pro54 and Pro57. Lys67 bears the 5-hydroxylysine mark. Residue Lys67 is glycosylated (O-linked (Gal...) hydroxylysine). 4-hydroxyproline occurs at positions 73, 79, and 85. Residues 79-94 are compositionally biased toward low complexity; that stretch reads PGRMGYPGPSGPMGPA. Lys100 bears the 5-hydroxylysine mark. Lys100 carries an O-linked (Gal...) hydroxylysine glycan. A C1q domain is found at 110-244; sequence KDQPRPAFSA…FSGFLIFPSA (135 aa). An N-linked (GlcNAc...) asparagine glycan is attached at Asn146. Cys172 and Cys189 are joined by a disulfide. Gln198 contacts Ca(2+).

In terms of assembly, core component of the complement C1 complex, a calcium-dependent complex composed of 1 molecule of the C1Q subcomplex, 2 molecules of C1R and 2 molecules of C1S. The C1Q subcomplex is composed 18 subunits: 3 chains of C1QA, C1QB, and C1QC trimerize to form 6 collagen-like triple helices connected to six globular ligand-recognition modules (C1q domain). Interacts with CR1 (via Sushi 24 and Sushi 25 domains). Interacts (via C-terminus) with CD33; this interaction activates CD33 inhibitory motifs. O-linked glycans are assumed to be the Glc-Gal disaccharides typically found as secondary modifications of hydroxylated lysines in collagen-like domains.

Its subcellular location is the secreted. It is found in the cell surface. Its activity is regulated as follows. The C1Q subcomplex is inhibited by sulfated molecules, such as triterpenoid sulfates, heparan sulfate, or chondroitin sulfates. Functionally, core component of the complement C1 complex, a multiprotein complex that initiates the classical pathway of the complement system, a cascade of proteins that leads to phagocytosis and breakdown of pathogens and signaling that strengthens the adaptive immune system. The classical complement pathway is initiated by the C1Q subcomplex of the C1 complex, which specifically binds IgG or IgM immunoglobulins complexed with antigens, forming antigen-antibody complexes on the surface of pathogens: C1QA, together with C1QB and C1QC, specifically recognizes and binds the Fc regions of IgG or IgM via its C1q domain. Immunoglobulin-binding activates the proenzyme C1R, which cleaves C1S, initiating the proteolytic cascade of the complement system. The C1Q subcomplex is activated by a hexamer of IgG complexed with antigens, while it is activated by a pentameric IgM. The C1Q subcomplex also recognizes and binds phosphatidylserine exposed on the surface of cells undergoing programmed cell death, possibly promoting activation of the complement system. The protein is Complement C1q subcomponent subunit A (C1QA) of Bos taurus (Bovine).